A 222-amino-acid polypeptide reads, in one-letter code: uncharacterized protein (222 aa).

Belongs to the PhoU family.

It localises to the cytoplasm. Its function is as follows. Not known; probably involved in phosphate transport and/or metabolism. This is an uncharacterized protein from Deinococcus radiodurans (strain ATCC 13939 / DSM 20539 / JCM 16871 / CCUG 27074 / LMG 4051 / NBRC 15346 / NCIMB 9279 / VKM B-1422 / R1).